A 238-amino-acid polypeptide reads, in one-letter code: ATP synthase subunit a (238 aa).

A run of 5 helical transmembrane segments spans residues 18 to 38, 76 to 96, 114 to 134, 166 to 186, and 193 to 213; these read LTLL…VFWA, YSLL…LGLF, NLAF…IEGV, SLAI…GLIV, and VYWW…SVFI.

It belongs to the ATPase A chain family. In terms of assembly, F-type ATPases have 2 components, CF(1) - the catalytic core - and CF(0) - the membrane proton channel. CF(1) has five subunits: alpha(3), beta(3), gamma(1), delta(1), epsilon(1). CF(0) has three main subunits: a(1), b(2) and c(9-12). The alpha and beta chains form an alternating ring which encloses part of the gamma chain. CF(1) is attached to CF(0) by a central stalk formed by the gamma and epsilon chains, while a peripheral stalk is formed by the delta and b chains.

The protein localises to the cell membrane. In terms of biological role, key component of the proton channel; it plays a direct role in the translocation of protons across the membrane. The polypeptide is ATP synthase subunit a (Streptococcus pyogenes serotype M49 (strain NZ131)).